The sequence spans 71 residues: Pre-hexon-linking protein VIII (71 aa).

This sequence belongs to the adenoviridae hexon-linking protein family. As to quaternary structure, interacts with the peripentonal hexons as well as the hexons in the facets. Part of a complex composed of the core-capsid bridging protein, the endosome lysis protein VI and the hexon-linking protein VIII; these interactions bridge the virus core to the capsid. Post-translationally, cleaved by the viral protease during virion maturation. May cause the middle segment to be shed from the capsid.

The protein resides in the host nucleus. It localises to the virion. Structural component of the virion that acts as a cement protein on the capsid interior and which glue the peripentonal hexons and group-of-nine hexons together. The polypeptide is Pre-hexon-linking protein VIII (Canine adenovirus serotype 1 (strain Glaxo) (CAdV-1)).